A 636-amino-acid chain; its full sequence is Epithelial sodium channel subunit alpha (636 aa).

A disordered region spans residues 1 to 28 (MKSENQPEDKRIGKLKREANMQKMKEAA). At 1–77 (MKSENQPEDK…VCSKKNRMKT (77 aa)) the chain is on the cytoplasmic side. The helical transmembrane segment at 78–98 (AFWSILFFFTFGLMYWQFGII) threads the bilayer. Residues 99–549 (YREYFSFPVN…SQWSLWFGSS (451 aa)) are Extracellular-facing. 10 disulfides stabilise this stretch: Cys-126–Cys-293, Cys-218–Cys-225, Cys-270–Cys-277, Cys-381–Cys-466, Cys-403–Cys-443, Cys-403–Cys-462, Cys-407–Cys-458, Cys-416–Cys-443, Cys-416–Cys-466, and Cys-418–Cys-432. A helical transmembrane segment spans residues 550 to 570 (VLSVVELVELILDFIAITCIL). The Cytoplasmic segment spans residues 571-636 (AIHWLNMNRS…LRRVSSQQTE (66 aa)).

The protein belongs to the amiloride-sensitive sodium channel (TC 1.A.6) family. SCNN1A subfamily. Heterotrimer; containing an alpha/SCNN1A, a beta/SCNN1B and a gamma/SCNN1G subunit.

It localises to the apical cell membrane. It is found in the cell projection. The protein localises to the cilium. The protein resides in the cytoplasmic granule. Its subcellular location is the cytoplasm. It localises to the cytoplasmic vesicle. It is found in the secretory vesicle. The protein localises to the acrosome. The protein resides in the flagellum. It catalyses the reaction Na(+)(in) = Na(+)(out). With respect to regulation, originally identified and characterized by its inhibition by the diuretic drug amiloride. In terms of biological role, this is one of the three pore-forming subunits of the heterotrimeric epithelial sodium channel (ENaC), a critical regulator of sodium balance and fluid homeostasis. ENaC operates in epithelial tissues, where it mediates the electrodiffusion of sodium ions from extracellular fluid through the apical membrane of cells, with water following osmotically. This Anolis carolinensis (Green anole) protein is Epithelial sodium channel subunit alpha.